The following is a 310-amino-acid chain: Protein FIP2 (310 aa).

Residues 1–58 are disordered; that stretch reads MGFAPVTPAAVETYDPDVDHDDESNGLDGFRVRSKRSGKFSGGYSDSPREVGDGYGVR. Positions 14–25 are enriched in acidic residues; the sequence is YDPDVDHDDESN. S77 and S105 each carry phosphoserine. Disordered stretches follow at residues 115–135, 152–171, and 177–221; these read ATRL…GSGG, FKPK…LDYD, and DRAE…GSSS. Over residues 208–221 the composition is skewed to polar residues; sequence PRNTGASNGYGSSS.

As to quaternary structure, interacts with FRI. Interacts with WAV3.

This chain is Protein FIP2, found in Arabidopsis thaliana (Mouse-ear cress).